The primary structure comprises 84 residues: Envelope small membrane protein (84 aa).

Topologically, residues 1-18 (MFMADAYLADTVWYVGQI) are virion surface. The chain crosses the membrane as a helical span at residues 19–39 (IFIVAICLLVIIVVVAFLATF). Topologically, residues 40–80 (KLCIQLCGMCNTLVLSPSIYVFNRGRQFYEFYNDVKPPVLD) are intravirion.

This sequence belongs to the betacoronaviruses E protein family. In terms of assembly, homopentamer. Interacts with membrane protein M in the budding compartment of the host cell, which is located between endoplasmic reticulum and the Golgi complex. Interacts with Nucleoprotein.

The protein resides in the host Golgi apparatus membrane. Its function is as follows. Plays a central role in virus morphogenesis and assembly. Acts as a viroporin and self-assembles in host membranes forming pentameric protein-lipid pores that allow ion transport. Also plays a role in the induction of apoptosis. The polypeptide is Envelope small membrane protein (Porcine hemagglutinating encephalomyelitis virus (strain 67N) (HEV-67N)).